Consider the following 540-residue polypeptide: MAAKDVKFGNDARVKMLRGVNVLADAVKVTLGPKGRNVVLDKSFGAPTITKDGVSVAREIELEDKFENMGAQMVKEVASKANDAAGDGTTTATVLAQAIIAEGLKAVAAGMNPMDLKRGIDKAVVAAVEELKTLSVPCSDSKAIAQVGTISANSDETVGKLIAEAMDKVGKEGVITVEDGTGLEDELDVVEGMQFDRGYLSPYFINKPETGAVELESPFILLADKKVSNIREMLPVLEAVAKAGKPLVIIAEDVEGEALATLVVNTMRGIVKVAAVKAPGFGDRRKAMLQDIATLTGGTVISEEIGMELEKATLEDLGQAKRVVINKDTTTIIDGVGEEGAIQGRVAQIRKQIEEATSDYDREKLQERVAKLAGGVAVIKVGAATEVEMKEKKARVDDALHATRAAVEEGVVAGGGVALVRVAAKLAGLTAQNEDQNVGIKVALRAMEAPLRQIVSNAGEEPSVVANNVKAGEGNYGYNAATEEYGNMIDFGILDPTKVTRSALQYAASVAGLMITTECMVTDLPKSDAADLGAAGGMGG.

Residues Thr-30–Pro-33, Lys-51, Asp-87–Thr-91, Gly-415, Asn-479–Ala-481, and Asp-495 contribute to the ATP site.

Belongs to the chaperonin (HSP60) family. As to quaternary structure, forms a cylinder of 14 subunits composed of two heptameric rings stacked back-to-back. Interacts with the co-chaperonin GroES.

It localises to the cytoplasm. It catalyses the reaction ATP + H2O + a folded polypeptide = ADP + phosphate + an unfolded polypeptide.. Its function is as follows. Together with its co-chaperonin GroES, plays an essential role in assisting protein folding. The GroEL-GroES system forms a nano-cage that allows encapsulation of the non-native substrate proteins and provides a physical environment optimized to promote and accelerate protein folding. In Raoultella ornithinolytica (Klebsiella ornithinolytica), this protein is Chaperonin GroEL.